The following is a 557-amino-acid chain: MNIVGQMKEQLKEEIRQAVGKAGLVAAEELPEVLLEVPREKAHGDYSTNIAMQLARIAKKPPRAIAEAIVEKFDAERVSVARIEVAGPGFINFYMDNRYLTAVVPAILQAGQAYGESNVGKGEKVQVEFVSANPTGNLHLGHARGAAVGDSLSNILAKAGFDVTREYYINDAGKQIYNLAKSVEARYFQALGTDMPLPEDGYYGDDIVEIGKKLADEYGDRFVHVDEEERLAFFREYGLRYELDKIKNDLAAFRVPFDVWYSETSLYESGKIDEALSTLRERGYIYEQDGATWFRSTAFGDDKDRVLIKQDGTYTYLLPDIAYHQDKLRRGFTKLINVWGADHHGYIPRMKAAIAALGYDPEALEVEIIQMVNLYQNGERVKMSKRTGKAVTMRELMEEVGVDAVRYFFAMRSGDTHLDFDMDLAVAQSNENPVYYVQYAHARVSSILRQAKEHQLSYEGDVDLHHLVETEKEIELLKALGDFPDVVAEAALKRMPHRVTAYAFDLASALHSFYNAEKVLDLDQIEKTKARLALVKAVQITLQNALALIGVSAPEQM.

The 'HIGH' region motif lies at A132–H142.

The protein belongs to the class-I aminoacyl-tRNA synthetase family. In terms of assembly, monomer.

The protein localises to the cytoplasm. The catalysed reaction is tRNA(Arg) + L-arginine + ATP = L-arginyl-tRNA(Arg) + AMP + diphosphate. The sequence is that of Arginine--tRNA ligase from Geobacillus thermodenitrificans (strain NG80-2).